The chain runs to 2311 residues: MRNACLLLNRLGAFYFIWISAAYCSFSKNCQDLCTSNLEGELGIANLCNVSDINVACTQGCQFWNATEQVNCPLKCNKTYTRECETVSCKFGCSRAEDAYGVEAQNCLNKPGAPFASSIGSHNITLGWKPANISEVKYIIQWKFHQLPGDWRYTEVVSETSYTVKDLQAFTEYEFRVVWIITSQLQLHSPPSPSYRTHASGVPTTAPIIKDIQSSSPNTVEVSWFPPLFPNGLIVGYNLVLTSENHELLRASRGHSFQFYSTFPNSTYRFSIVAVNEAGAGPPAEANITTPESKVKEKAKWLFLSRNQSLRKRYMEHFLEAAHCLQNGIIHHNITGISVNVYQQVVYFSEGNSIWVKGVVDMSDVSDLTLFYTGWGNITSISVDWLYQRMYFVMNEKIHVCQLENCTAAEDITPPYETSPRKIVADPYNGYIFCLLEDGIYRANLPLFPDTASAASLVVKSHTLRDFMINFQSKRLIFFNKTEQAFVSGFLDGSEFHTLRAHVPLDDMESFVYEDNIFTVTDGRAVFHEEISQVGSSSFNEYVVDCSLEYPEYFGFGNLLFYAASTQPYPLPTLPRLVTVLFGSDQAVISWSPPEYTIGTSRSAWQNWTYDVKVSSQSTFEEEWVVSNITDTRFAVKNLVSFTEYEMSVRAVSPAGEGPWSEPFRGMTFEEAEEEPYILAVGAEGLWKQRLDSYGPGEFLYPHIRNISDLDWYNDTLYWSNSMGKVQTWSMNKKEGTTENSYVPDIKNARMLAFDWLGQCLYWAGKANTIYRKSLLGDHMDVVAHVVYVVKDLAVDSVNGYLYWATTYTVESARLNGEEYLILQEHLQFSGKQVVGLALDLTSGFLYWLVQDGLCLNLYRISICKESCGNIMVTEISAWSVSEVSQNALQYYSGRLFWINRLKFITTQELNQSISIPFSEPAEFAAFTLVHTSLKPLPGNFSFTPKVIPSSVPESSFKIKGNSSSFHIIWNASTDVQWGTVFYCVGSNALQMRTLESERCLHPHDLTVPSYKVDWLEPFTLFDFSVTPYTYWGKAPTTSVYLRAPEGVPSAPANPRIYVLHSNTHEGEEKVLVELRWDKPERDNGVLTQFRVYYQLLYESGAADTLMEWNVSDVKPTALLFSIRDEHPRLTVRFQVQAFTSVGPGPMSDVAQRNSSDIFPVPTLITFSSNKLFLTDIDSNHTIWEVLTNRNIKDICYTADDDKVYYILEDSLFLLNVQSTSESQLFEDVFLRNVTAITVDWIARHLFVAMKTSWNETQVFFIDLELKTKSLKALNIQLGKRNSTISSLLSYPFLSRLYWIEELDYGSRMFYYDILNNTMYHILGYESVEEKMRNYCNCNVAEAELGRPISIDVTDIKKPQLLFIRGRDEIWASDVDACHCWRITKIPSFQGTKIGSLTVDKQFIYWTIEKKEYTEICLADKESTRHSLQRKANHELKILAYSSAMQSYPDKKCLTPLLDTEKPTILDTTNTSFTLSLPSVTTQQLCPSISQPTPTYLVFFREITSNHENSTYHFSTLLQKTLEIQEPIAVINNLKPFSTYAIQVAVKNYYSNQNQLAVGREAISTTLYGVPEGVDSIKTVVLSDTTINISWSEPLEPNGPLESIRYQISVNLLSLFPEAPLRKSEFPNGTLSWSVSDLQSGTNNLFKVLAFHPNENWFSESVPVIAKTFETPLSPSNIIPRNTSFQLEWRAPLHINGTSFWFELSKWQTRSDWFSPASTTCTVGPVYTCNLTGTLPSANYLVRATVVYVTGMKSTSSPTSFKTTAGVPSKPGTPKRAEDSKNSVQWEKAEDNGSNLTYYILESRKQSGNTNKVKSLWVVVYNGSCDNICTWKAENLEGTFQFRAAAANMLGLGEYSDTSKDIVLAKDTVTSPDITAIVAVIGAVVLGLTIIILFGFVWHQRWKSRKPASTGQIVLVKEDKELAQLRGMAETVGLANACYAVSTLPSQAEIESLPAFPRDKLNLHKLLGSGAFGEVYEGTALDILADGSGESRVAVKTLKRGATDQEKSEFLKEAHLMSKFDHPHILKLLGVCLLNEPQYLILELMEGGDLLSYLRGARKQKFQSPLLTLTDLLDICLDICKGCVYLEKMRFIHRDLAARNCLVSEKQYGSCSRVVKIGDFGLARDIYKNDYYRKRGEGLINVRWMAPESLIDGVFTNHSDVWAFGVLVWETLTLGQQPYPGLSNIEVLHHVRSGGRLESPNNCPDDIRDLMTRCWAQDPHNRPTFFYIQHKLQEIRHSPLCFSYFLGDKESVAGFINQAFEDIDVPPADSDSILSTTLMEARDQEGLNYLVVVKESNQDQGSISSAELTSV.

Positions 1 to 24 are cleaved as a signal peptide; it reads MRNACLLLNRLGAFYFIWISAAYC. Residues 25–1873 lie on the Extracellular side of the membrane; that stretch reads SFSKNCQDLC…LAKDTVTSPD (1849 aa). 34 N-linked (GlcNAc...) asparagine glycosylation sites follow: asparagine 49, asparagine 65, asparagine 77, asparagine 123, asparagine 132, asparagine 265, asparagine 287, asparagine 307, asparagine 333, asparagine 377, asparagine 405, asparagine 480, asparagine 607, asparagine 628, asparagine 706, asparagine 714, asparagine 911, asparagine 940, asparagine 962, asparagine 971, asparagine 1110, asparagine 1154, asparagine 1180, asparagine 1233, asparagine 1255, asparagine 1282, asparagine 1316, asparagine 1470, asparagine 1509, asparagine 1588, asparagine 1628, asparagine 1682, asparagine 1696, and asparagine 1730. 2 Fibronectin type-III domains span residues 110 to 202 and 203 to 294; these read KPGA…ASGV and PTTA…PESK. The Fibronectin type-III 3 domain occupies 571-671; it reads LPTLPRLVTV…EPFRGMTFEE (101 aa). Fibronectin type-III domains are found at residues 952–1047 and 1051–1158; these read VPES…APEG and APAN…SSDI. 4 Fibronectin type-III domains span residues 1459–1569, 1570–1669, 1671–1766, and 1767–1868; these read DTEK…TLYG, VPEG…AKTF, TPLS…TTAG, and VPSK…AKDT. The segment covering 1754-1764 has biased composition (low complexity); that stretch reads STSSPTSFKTT. Residues 1754 to 1786 are disordered; that stretch reads STSSPTSFKTTAGVPSKPGTPKRAEDSKNSVQW. Basic and acidic residues predominate over residues 1775–1786; it reads KRAEDSKNSVQW. N-linked (GlcNAc...) asparagine glycans are attached at residues asparagine 1792, asparagine 1795, and asparagine 1822. The helical transmembrane segment at 1874-1898 threads the bilayer; the sequence is ITAIVAVIGAVVLGLTIIILFGFVW. Residues 1899–2311 are Cytoplasmic-facing; the sequence is HQRWKSRKPA…SISSAELTSV (413 aa). A Protein kinase domain is found at 1961–2240; sequence LNLHKLLGSG…KLQEIRHSPL (280 aa). ATP is bound by residues 1967 to 1975 and lysine 1996; that span reads LGSGAFGEV. Aspartate 2095 (proton acceptor) is an active-site residue. The residue at position 2131 (tyrosine 2131) is a Phosphotyrosine; by autocatalysis.

The protein belongs to the protein kinase superfamily. Tyr protein kinase family. Insulin receptor subfamily. In terms of assembly, interacts with VAV3; constitutive interaction mediating VAV3 phosphorylation. Highest expression in kidney. Also expressed in gonad, thymus, bursa, brain and kidney.

The protein resides in the cell membrane. It carries out the reaction L-tyrosyl-[protein] + ATP = O-phospho-L-tyrosyl-[protein] + ADP + H(+). Functionally, orphan receptor tyrosine kinase (RTK) that may activate several downstream signaling pathways related to cell differentiation, proliferation, growth and survival including the PI3 kinase-mTOR signaling pathway. Mediates the phosphorylation of PTPN11, an activator of this pathway. May also phosphorylate and activate the transcription factor STAT3 to control anchorage-independent cell growth. Mediates the phosphorylation and the activation of VAV3, a guanine nucleotide exchange factor regulating cell morphology. May activate other downstream signaling proteins including AKT1, MAPK1, MAPK3, IRS1, and PLCG2. This chain is Proto-oncogene tyrosine-protein kinase ROS (ROS1), found in Gallus gallus (Chicken).